The chain runs to 97 residues: uncharacterized protein (97 aa).

3 helical membrane passes run 5–25, 27–47, and 77–97; these read TLVAIVVFFGNGEPFHVSLSV, MVFVLLLSSTRIHEVVVLICY, and IISINDICIYGCIALTVVFIL.

It localises to the membrane. This is an uncharacterized protein from Saccharomyces cerevisiae (strain ATCC 204508 / S288c) (Baker's yeast).